The chain runs to 137 residues: MSFIKEFREFAMRGNVVDLAVGVIIGAAFGKIVSSLVADIIMPPLGLLISGIDFKQFAFTLREAQGDIPAVVMHYGVFIQNVFDFVIVAFAIFVAIKLINRLNRKKAEEPAAPPAPSKEEVLLGEIRDLLKEQNNRS.

The next 2 membrane-spanning stretches (helical) occupy residues 10–30 and 76–96; these read FAMR…AAFG and GVFI…FVAI.

It belongs to the MscL family. As to quaternary structure, homopentamer.

The protein localises to the cell inner membrane. Channel that opens in response to stretch forces in the membrane lipid bilayer. May participate in the regulation of osmotic pressure changes within the cell. The polypeptide is Large-conductance mechanosensitive channel (Salmonella choleraesuis (strain SC-B67)).